The following is a 514-amino-acid chain: MKNTLKLIFFILLLFALFVSLRMFIDVAFYSDVIGIKDVSILGIISILFTVSAFLIGCVIFLENRHPSKTLTWLIVLGIFPVFGFFAYLLFGQNFRRKRMFQKKALLDEQAFLQYKGHEDYEERILRNHKHQELLFRLADRLGALNISFQTETRTLTNGDETFRAILNGLKRAKHHIHMEYYIVRDDKLGTEIKDILIQKSKEGVVVRFLYDAVGSFKLSKSYIEELNDAGVEMIPFFPVRFPILNDKINYRNHRKIVVIDGNEGFVGGLNIGDEYLGKNKYFGFWRDTHLYLRGEAVQSLQLIFLQDWFYMTGEAVLAPEYLQAKAVEGDHWGGVQLVAGGPDNKWETIKHLYFAMIASARKSIWIATPYFIPDDDILSALKVAALAGIDVRLLMPSKPDKRTVFYASRSYFPELLDAGVKIYEYEKGFLHSKIVIVDSDLASIGTANMDMRSFHLNFEVNAFLYDTDSIRKLVQDFKDDLEESSEIHGDHFHKRRLHRRIVESTYRLLSPLL.

3 consecutive transmembrane segments (helical) span residues 7 to 27 (LIFF…FIDV), 41 to 61 (ILGI…CVIF), and 71 to 91 (LTWL…YLLF). 2 consecutive PLD phosphodiesterase domains span residues 249-276 (INYR…GDEY) and 427-454 (EKGF…DMRS). Catalysis depends on residues His-254, Lys-256, Asp-261, His-432, Lys-434, and Asp-439.

It belongs to the phospholipase D family. Cardiolipin synthase subfamily.

It localises to the cell membrane. It carries out the reaction 2 a 1,2-diacyl-sn-glycero-3-phospho-(1'-sn-glycerol) = a cardiolipin + glycerol. Catalyzes the reversible phosphatidyl group transfer from one phosphatidylglycerol molecule to another to form cardiolipin (CL) (diphosphatidylglycerol) and glycerol. The polypeptide is Cardiolipin synthase 2 (cls2) (Bacillus cereus (strain ATCC 14579 / DSM 31 / CCUG 7414 / JCM 2152 / NBRC 15305 / NCIMB 9373 / NCTC 2599 / NRRL B-3711)).